Consider the following 892-residue polypeptide: Putative leucine-rich repeat receptor-like serine/threonine-protein kinase At2g04300 (892 aa).

A signal peptide spans 1–26; sequence MKTHPQAILLCVLFFITFGLLHVVEA. Topologically, residues 27–523 are extracellular; the sequence is GNQEGFISLD…GAKKKNVVVL (497 aa). Residues asparagine 99, asparagine 186, asparagine 241, asparagine 267, and asparagine 294 are each glycosylated (N-linked (GlcNAc...) asparagine). LRR repeat units lie at residues 375-396, 399-422, 423-444, and 447-467; these read IKNI…PCVP, FMWD…FLNL, SSSH…LQNL, and SNNN…SLLV. N-linked (GlcNAc...) asparagine glycans are attached at residues asparagine 407, asparagine 421, asparagine 437, asparagine 450, and asparagine 469. Residues 524-544 form a helical membrane-spanning segment; sequence VVVSIALVVVLGSALALFLVF. At 545-892 the chain is on the cytoplasmic side; sequence RKRKTPRNEV…FGTEYTPEAR (348 aa). At threonine 573 the chain carries Phosphothreonine. The Protein kinase domain occupies 582–855; that stretch reads NNFEKILGKG…QVVIELNECL (274 aa). Residues 588–596 and lysine 610 contribute to the ATP site; that span reads LGKGGFGMV. Tyrosine 655 carries the post-translational modification Phosphotyrosine. Aspartate 707 functions as the Proton acceptor in the catalytic mechanism. 2 positions are modified to phosphothreonine: threonine 742 and threonine 747. Phosphotyrosine is present on tyrosine 755.

It belongs to the protein kinase superfamily. Ser/Thr protein kinase family.

It localises to the cell membrane. It carries out the reaction L-seryl-[protein] + ATP = O-phospho-L-seryl-[protein] + ADP + H(+). It catalyses the reaction L-threonyl-[protein] + ATP = O-phospho-L-threonyl-[protein] + ADP + H(+). This Arabidopsis thaliana (Mouse-ear cress) protein is Putative leucine-rich repeat receptor-like serine/threonine-protein kinase At2g04300.